Consider the following 133-residue polypeptide: Profilin Sal k 4.0101 (133 aa).

A disulfide bridge connects residues cysteine 95 and cysteine 117.

This sequence belongs to the profilin family. In terms of assembly, occurs in many kinds of cells as a complex with monomeric actin in a 1:1 ratio. As to expression, expressed in pollen.

The protein resides in the cytoplasm. It localises to the cytoskeleton. Binds to actin and affects the structure of the cytoskeleton. At high concentrations, profilin prevents the polymerization of actin, whereas it enhances it at low concentrations. The chain is Profilin Sal k 4.0101 from Kali turgidum (Prickly saltwort).